Consider the following 303-residue polypeptide: MHIYILGSAAGGGCPQWNCNCPNCHGVRTGTINAKVRTQSSIAISENGVDWILLNASPDIRQQLFDFKAAQPARKLRDTGITNVILMDSQLDHTTGLLTLREGCPMNVWCTEMVYQDLTTGFPVFNMLKHWNGGLQYHQVDPKQAFIIDGFENLEFLPLIIQSAAPPYSPHRHDPHEGDNIALIIKDHKTQKQLFYAPGLGKIDDQIMQIMQDSDCVMIDGTLWTDDEMQQTGVGKKTGREMGHLYISGEGGSLSYLNQLSTPKKVLIHINNTNPILNEDSAQFAELKANGVEVAFDGMQIEL.

This sequence belongs to the PqqB family.

Its pathway is cofactor biosynthesis; pyrroloquinoline quinone biosynthesis. Its function is as follows. May be involved in the transport of PQQ or its precursor to the periplasm. This is Coenzyme PQQ synthesis protein B from Acinetobacter baumannii (strain SDF).